The following is a 328-amino-acid chain: Ketol-acid reductoisomerase (NADP(+)) (328 aa).

Positions 2–182 constitute a KARI N-terminal Rossmann domain; it reads AKIYRDGDAS…GATRAGVIET (181 aa). NADP(+) is bound by residues 25–28, Arg-48, Ser-53, and 83–86; these read YGIQ and DMEQ. The active site involves His-108. An NADP(+)-binding site is contributed by Gly-134. One can recognise a KARI C-terminal knotted domain in the interval 183–328; it reads TFAEETETDL…AEMRKLLFGP (146 aa). Residues Asp-191, Glu-195, Glu-227, and Glu-231 each coordinate Mg(2+). Ser-252 contacts substrate.

The protein belongs to the ketol-acid reductoisomerase family. Mg(2+) is required as a cofactor.

It catalyses the reaction (2R)-2,3-dihydroxy-3-methylbutanoate + NADP(+) = (2S)-2-acetolactate + NADPH + H(+). It carries out the reaction (2R,3R)-2,3-dihydroxy-3-methylpentanoate + NADP(+) = (S)-2-ethyl-2-hydroxy-3-oxobutanoate + NADPH + H(+). Its pathway is amino-acid biosynthesis; L-isoleucine biosynthesis; L-isoleucine from 2-oxobutanoate: step 2/4. It participates in amino-acid biosynthesis; L-valine biosynthesis; L-valine from pyruvate: step 2/4. In terms of biological role, involved in the biosynthesis of branched-chain amino acids (BCAA). Catalyzes an alkyl-migration followed by a ketol-acid reduction of (S)-2-acetolactate (S2AL) to yield (R)-2,3-dihydroxy-isovalerate. In the isomerase reaction, S2AL is rearranged via a Mg-dependent methyl migration to produce 3-hydroxy-3-methyl-2-ketobutyrate (HMKB). In the reductase reaction, this 2-ketoacid undergoes a metal-dependent reduction by NADPH to yield (R)-2,3-dihydroxy-isovalerate. This is Ketol-acid reductoisomerase (NADP(+)) from Pyrobaculum calidifontis (strain DSM 21063 / JCM 11548 / VA1).